Consider the following 262-residue polypeptide: Glucosamine-6-phosphate deaminase (262 aa).

The active-site Proton acceptor; for enolization step is Asp-63. Asn-129 acts as the For ring-opening step in catalysis. His-131 (proton acceptor; for ring-opening step) is an active-site residue. The For ring-opening step role is filled by Glu-136.

The protein belongs to the glucosamine/galactosamine-6-phosphate isomerase family. NagB subfamily.

It carries out the reaction alpha-D-glucosamine 6-phosphate + H2O = beta-D-fructose 6-phosphate + NH4(+). The protein operates within amino-sugar metabolism; N-acetylneuraminate degradation; D-fructose 6-phosphate from N-acetylneuraminate: step 5/5. Its function is as follows. Catalyzes the reversible isomerization-deamination of glucosamine 6-phosphate (GlcN6P) to form fructose 6-phosphate (Fru6P) and ammonium ion. The chain is Glucosamine-6-phosphate deaminase from Bacillus cytotoxicus (strain DSM 22905 / CIP 110041 / 391-98 / NVH 391-98).